A 479-amino-acid chain; its full sequence is Inhibitory synaptic factor 2A (479 aa).

S177 carries the phosphoserine modification. Disordered stretches follow at residues 226-247 (GRAK…ALRR) and 315-338 (SPEC…PSPT). The span at 228–237 (AKQDRGRPNS) shows a compositional bias: basic and acidic residues. Residues 318-337 (CSEQPSQTHTPPGLGNQPSP) are compositionally biased toward polar residues. A coiled-coil region spans residues 353-379 (TEVVDLKAQLQMMENLISSSQETIKVL). Polar residues predominate over residues 449–461 (SPYSQETYSSTPK). A disordered region spans residues 449 to 472 (SPYSQETYSSTPKQKSKTESKKHG).

The protein belongs to the INSYN2 family. In terms of assembly, interacts with GPHN.

It localises to the postsynaptic density. Its function is as follows. Component of the protein machinery at the inhibitory synapses, probably acting as a scaffold. Inhibitory synapses dampen neuronal activity through postsynaptic hyperpolarization. This synaptic inhibition is fundamental for the functioning of the central nervous system, shaping and orchestrating the flow of information through neuronal networks to generate a precise neural code. The chain is Inhibitory synaptic factor 2A from Homo sapiens (Human).